The following is a 426-amino-acid chain: NADH-quinone oxidoreductase subunit F (426 aa).

Position 65–74 (65–74) interacts with NAD(+); that stretch reads GRGGAGFPTG. FMN is bound at residue 176 to 223; that stretch reads GAGAYICGEETALIESLEGKRGHPRLKPPYPVQKGLWGKPTVVNNVET. [4Fe-4S] cluster-binding residues include C347, C350, C353, and C393.

The protein belongs to the complex I 51 kDa subunit family. FMN serves as cofactor. It depends on [4Fe-4S] cluster as a cofactor.

It carries out the reaction a quinone + NADH + 5 H(+)(in) = a quinol + NAD(+) + 4 H(+)(out). Functionally, NDH-1 shuttles electrons from NADH, via FMN and iron-sulfur (Fe-S) centers, to quinones in the respiratory chain. Couples the redox reaction to proton translocation (for every two electrons transferred, four hydrogen ions are translocated across the cytoplasmic membrane), and thus conserves the redox energy in a proton gradient. The chain is NADH-quinone oxidoreductase subunit F (nuoF) from Aquifex aeolicus (strain VF5).